The chain runs to 57 residues: DNA gyrase inhibitor YacG (57 aa).

The Zn(2+) site is built by Cys5, Cys8, Cys20, and Cys24.

It belongs to the DNA gyrase inhibitor YacG family. In terms of assembly, interacts with GyrB. Requires Zn(2+) as cofactor.

Functionally, inhibits all the catalytic activities of DNA gyrase by preventing its interaction with DNA. Acts by binding directly to the C-terminal domain of GyrB, which probably disrupts DNA binding by the gyrase. The chain is DNA gyrase inhibitor YacG from Caulobacter vibrioides (strain ATCC 19089 / CIP 103742 / CB 15) (Caulobacter crescentus).